The following is a 379-amino-acid chain: Queuine tRNA-ribosyltransferase (379 aa).

Residue D94 is the Proton acceptor of the active site. Residues 94 to 98 (DSGGF), D148, Q191, and G218 contribute to the substrate site. An RNA binding region spans residues 249-255 (GVGSPDS). The active-site Nucleophile is the D268. The tract at residues 273–277 (TRIAR) is RNA binding; important for wobble base 34 recognition. Residues C306, C308, C311, and H337 each contribute to the Zn(2+) site.

Belongs to the queuine tRNA-ribosyltransferase family. Homodimer. Within each dimer, one monomer is responsible for RNA recognition and catalysis, while the other monomer binds to the replacement base PreQ1. The cofactor is Zn(2+).

The catalysed reaction is 7-aminomethyl-7-carbaguanine + guanosine(34) in tRNA = 7-aminomethyl-7-carbaguanosine(34) in tRNA + guanine. Its pathway is tRNA modification; tRNA-queuosine biosynthesis. Its function is as follows. Catalyzes the base-exchange of a guanine (G) residue with the queuine precursor 7-aminomethyl-7-deazaguanine (PreQ1) at position 34 (anticodon wobble position) in tRNAs with GU(N) anticodons (tRNA-Asp, -Asn, -His and -Tyr). Catalysis occurs through a double-displacement mechanism. The nucleophile active site attacks the C1' of nucleotide 34 to detach the guanine base from the RNA, forming a covalent enzyme-RNA intermediate. The proton acceptor active site deprotonates the incoming PreQ1, allowing a nucleophilic attack on the C1' of the ribose to form the product. After dissociation, two additional enzymatic reactions on the tRNA convert PreQ1 to queuine (Q), resulting in the hypermodified nucleoside queuosine (7-(((4,5-cis-dihydroxy-2-cyclopenten-1-yl)amino)methyl)-7-deazaguanosine). This Bacillus anthracis (strain CDC 684 / NRRL 3495) protein is Queuine tRNA-ribosyltransferase.